Consider the following 972-residue polypeptide: Fibroblast growth factor receptor (972 aa).

Positions 1 to 43 (MSLPRCPRTRTVMFSRTLTRCYPQRTLWIAILCVICSWTLSTA) are cleaved as a signal peptide. The Extracellular segment spans residues 44 to 547 (GATTIRDKEV…NNMQPTSKTQ (504 aa)). The Fibronectin type-III domain occupies 57–152 (APQDLTAIPV…YIEASGTPPI (96 aa)). Residues Asn109, Asn121, Asn191, Asn203, Asn239, Asn272, Asn315, Asn390, Asn398, Asn419, Asn422, and Asn460 are each glycosylated (N-linked (GlcNAc...) asparagine). Residues 150–242 (PPIPPTLRRN…GQPIHVNFTL (93 aa)) form the Ig-like C2-type 1 domain. A disulfide bridge connects residues Cys176 and Cys226. Ig-like C2-type domains follow at residues 282 to 374 (PRFT…YDVK) and 383 to 517 (PIMS…AYLD). Residues Cys306 and Cys358 are joined by a disulfide bond. A disulfide bond links Cys403 and Cys501. A helical membrane pass occupies residues 548–568 (LIIFSVVGFVVVLILVTCIAI). The Cytoplasmic portion of the chain corresponds to 569–972 (LCKQTQVRHR…QTRDCCPYAN (404 aa)). The Protein kinase domain maps to 639 to 925 (LTVGKTIGEG…ISVSSNQDYL (287 aa)). ATP-binding positions include 645-653 (IGEGAFGKV) and Lys673. Asp781 functions as the Proton acceptor in the catalytic mechanism. The residue at position 812 (Tyr812) is a Phosphotyrosine; by autocatalysis.

The protein belongs to the protein kinase superfamily. Tyr protein kinase family. Fibroblast growth factor receptor subfamily.

The protein resides in the membrane. It catalyses the reaction L-tyrosyl-[protein] + ATP = O-phospho-L-tyrosyl-[protein] + ADP + H(+). In terms of biological role, receptor for basic fibroblast growth factor. This is Fibroblast growth factor receptor (FGFR) from Strongylocentrotus purpuratus (Purple sea urchin).